The following is a 356-amino-acid chain: MFYLIASAEGFSRLFNLIRYITFRTGAAAITALLIGLIFGPRFIGWMRIHQHKGQPIRDDGPKTHLAKAGTPTMGGLMILIAVSISLFLWMDFANPYVWACIAVMLGFGVIGFIDDYDKVTQNSTRGVSGKVRLLWEFGIAFFACYLILKDGNTQLYLPFYNGPVIDLGWFYYPFAAFVIVGTANSVNLTDGLDGLATMPVIIASLAFFVISYVVGNAVFAHYLGIPHVPGAGELTILTGAIIGAGFAFLWFNAPPAAIFMGDTGSLALGGCLGTIAVATHHEIVLGIVGGLFVAEALSVIIQVGFYKRFKRRVFRMAPLHHHFEQLGWSEPTVVIRFWIISFALALLGLATLKLR.

9 consecutive transmembrane segments (helical) span residues 27–47 (AAAITALLIGLIFGPRFIGWM), 74–94 (MGGLMILIAVSISLFLWMDFA), 97–117 (YVWACIAVMLGFGVIGFIDDY), 128–148 (VSGKVRLLWEFGIAFFACYLI), 164–184 (PVIDLGWFYYPFAAFVIVGTA), 201–221 (VIIASLAFFVISYVVGNAVFA), 241–261 (AIIGAGFAFLWFNAPPAAIFM), 284–304 (IVLGIVGGLFVAEALSVIIQV), and 333–353 (TVVIRFWIISFALALLGLATL).

Belongs to the glycosyltransferase 4 family. MraY subfamily. Requires Mg(2+) as cofactor.

Its subcellular location is the cell inner membrane. It catalyses the reaction UDP-N-acetyl-alpha-D-muramoyl-L-alanyl-gamma-D-glutamyl-meso-2,6-diaminopimeloyl-D-alanyl-D-alanine + di-trans,octa-cis-undecaprenyl phosphate = di-trans,octa-cis-undecaprenyl diphospho-N-acetyl-alpha-D-muramoyl-L-alanyl-D-glutamyl-meso-2,6-diaminopimeloyl-D-alanyl-D-alanine + UMP. It functions in the pathway cell wall biogenesis; peptidoglycan biosynthesis. Catalyzes the initial step of the lipid cycle reactions in the biosynthesis of the cell wall peptidoglycan: transfers peptidoglycan precursor phospho-MurNAc-pentapeptide from UDP-MurNAc-pentapeptide onto the lipid carrier undecaprenyl phosphate, yielding undecaprenyl-pyrophosphoryl-MurNAc-pentapeptide, known as lipid I. This is Phospho-N-acetylmuramoyl-pentapeptide-transferase from Zymomonas mobilis subsp. mobilis (strain ATCC 31821 / ZM4 / CP4).